The sequence spans 264 residues: Splicing factor U2af 38 kDa subunit (264 aa).

Residues 12 to 40 form a C3H1-type 1 zinc finger; the sequence is EKDKVNCSFYFKIGACRHGDRCSRIHNKP. Position 19 is a phosphoserine (S19). In terms of domain architecture, RRM spans 44–149; it reads QTVLLQNLYV…RPVYSELSPV (106 aa). The segment at 151–178 adopts a C3H1-type 2 zinc-finger fold; sequence DFREACCRQYEMGECTRSGFCNFMHLKP. A compositionally biased stretch (basic residues) spans 190 to 219; sequence RRRRARSRSRSPGRRRGSRSRSRSPGRRGG. Residues 190–264 form a disordered region; the sequence is RRRRARSRSR…GGGGGGGGRY (75 aa). Over residues 233–251 the composition is skewed to basic and acidic residues; it reads NERDNMRGNDRGNDRDRRK. Residues 253–264 show a composition bias toward gly residues; the sequence is GGGGGGGGGGRY.

The protein belongs to the splicing factor SR family. In terms of assembly, associates with a 65 kDa protein.

It is found in the nucleus. Necessary for the splicing of pre-mRNA. Binds to the polypyrimidine tract of introns early during spliceosome assembly. The sequence is that of Splicing factor U2af 38 kDa subunit (U2af38) from Drosophila melanogaster (Fruit fly).